The following is a 138-amino-acid chain: Thyrotropin subunit beta (138 aa).

The N-terminal stretch at 1-20 is a signal peptide; it reads MTAIFLMSMLFGLACGQAMS. Intrachain disulfides connect C22–C72, C36–C87, C39–C125, C47–C103, C51–C105, and C108–C115. An N-linked (GlcNAc...) asparagine glycan is attached at N43. Positions 133–138 are excised as a propeptide; it reads VLEFSI.

It belongs to the glycoprotein hormones subunit beta family. In terms of assembly, heterodimer of a common alpha chain and a unique beta chain which confers biological specificity to thyrotropin, lutropin, follitropin and gonadotropin.

It is found in the secreted. Its function is as follows. Indispensable for the control of thyroid structure and metabolism. The chain is Thyrotropin subunit beta (TSHB) from Sus scrofa (Pig).